The following is a 415-amino-acid chain: Leucine-rich repeat-containing protein 34 (415 aa).

2 LRR repeats span residues 246–272 (TLRYLDVSCNKITRDGMVFLADVLKSN) and 274–296 (TLEVLDLSFNRIENAGAKYLSET).

Interacts with NPM1 and NCL.

It is found in the nucleus. It localises to the nucleolus. The protein resides in the cytoplasm. Functionally, highly expressed in stem cells where it may be involved in regulation of pluripotency. In embryonic stem cells (ESCs), important for normal expression of the pluripotency regulators POU5F1/OCT4 and KLF4. Also important for expression of the ectodermal marker gene NES and the endodermal marker gene GATA4. Promotes stem cell proliferation in vitro. The sequence is that of Leucine-rich repeat-containing protein 34 (Lrrc34) from Rattus norvegicus (Rat).